The following is a 743-amino-acid chain: Photosystem I P700 chlorophyll a apoprotein A2 (743 aa).

8 helical membrane-spanning segments follow: residues 46–69 (IFAT…FHVA), 135–158 (LYMG…LHLQ), 175–199 (LNHH…HVAI), 273–291 (MAHH…GHMY), 336–359 (LHFQ…QHMY), 375–401 (AALY…IFWV), 423–445 (AIIS…LYVH), and 526–544 (FLVH…LILV). C568 and C577 together coordinate [4Fe-4S] cluster. 2 consecutive transmembrane segments (helical) span residues 584-605 (AFYL…YWHW) and 652-674 (LSVW…MFLI). Positions 663, 671, and 679 each coordinate chlorophyll a. Phylloquinone is bound at residue W680. A helical membrane pass occupies residues 716-736 (LVGLTHFTVGYVLTYAAFLIA).

The protein belongs to the PsaA/PsaB family. As to quaternary structure, the PsaA/B heterodimer binds the P700 chlorophyll special pair and subsequent electron acceptors. PSI consists of a core antenna complex that captures photons, and an electron transfer chain that converts photonic excitation into a charge separation. The cyanobacterial PSI reaction center is composed of one copy each of PsaA,B,C,D,E,F,I,J,K,L,M and X, and forms trimeric complexes. Requires PSI electron transfer chain: 5 chlorophyll a, 1 chlorophyll a', 2 phylloquinones and 3 4Fe-4S clusters. PSI core antenna: 90 chlorophyll a, 22 carotenoids, 3 phospholipids and 1 galactolipid. P700 is a chlorophyll a/chlorophyll a' dimer, A0 is one or more chlorophyll a, A1 is one or both phylloquinones and FX is a shared 4Fe-4S iron-sulfur center. as cofactor.

It is found in the cellular thylakoid membrane. The enzyme catalyses reduced [plastocyanin] + hnu + oxidized [2Fe-2S]-[ferredoxin] = oxidized [plastocyanin] + reduced [2Fe-2S]-[ferredoxin]. In terms of biological role, psaA and PsaB bind P700, the primary electron donor of photosystem I (PSI), as well as the electron acceptors A0, A1 and FX. PSI is a plastocyanin/cytochrome c6-ferredoxin oxidoreductase, converting photonic excitation into a charge separation, which transfers an electron from the donor P700 chlorophyll pair to the spectroscopically characterized acceptors A0, A1, FX, FA and FB in turn. Oxidized P700 is reduced on the lumenal side of the thylakoid membrane by plastocyanin or cytochrome c6. The sequence is that of Photosystem I P700 chlorophyll a apoprotein A2 from Mastigocladus laminosus (Fischerella sp.).